Consider the following 482-residue polypeptide: UDP-N-acetylmuramoyl-L-alanyl-D-glutamate--2,6-diaminopimelate ligase (482 aa).

Residue Ser-30 coordinates UDP-N-acetyl-alpha-D-muramoyl-L-alanyl-D-glutamate. 111–117 contributes to the ATP binding site; sequence GTNGKTT. Residues 153 to 154, Ser-180, Gln-186, and Arg-188 each bind UDP-N-acetyl-alpha-D-muramoyl-L-alanyl-D-glutamate; that span reads TT. The residue at position 220 (Lys-220) is an N6-carboxylysine. Meso-2,6-diaminopimelate-binding positions include Arg-378, 402–405, Gly-455, and Glu-459; that span reads DNPR. The Meso-diaminopimelate recognition motif signature appears at 402–405; sequence DNPR.

Belongs to the MurCDEF family. MurE subfamily. Requires Mg(2+) as cofactor. Carboxylation is probably crucial for Mg(2+) binding and, consequently, for the gamma-phosphate positioning of ATP.

The protein localises to the cytoplasm. It catalyses the reaction UDP-N-acetyl-alpha-D-muramoyl-L-alanyl-D-glutamate + meso-2,6-diaminopimelate + ATP = UDP-N-acetyl-alpha-D-muramoyl-L-alanyl-gamma-D-glutamyl-meso-2,6-diaminopimelate + ADP + phosphate + H(+). It participates in cell wall biogenesis; peptidoglycan biosynthesis. Functionally, catalyzes the addition of meso-diaminopimelic acid to the nucleotide precursor UDP-N-acetylmuramoyl-L-alanyl-D-glutamate (UMAG) in the biosynthesis of bacterial cell-wall peptidoglycan. The chain is UDP-N-acetylmuramoyl-L-alanyl-D-glutamate--2,6-diaminopimelate ligase from Bacteroides thetaiotaomicron (strain ATCC 29148 / DSM 2079 / JCM 5827 / CCUG 10774 / NCTC 10582 / VPI-5482 / E50).